A 122-amino-acid chain; its full sequence is Secretion system apparatus protein SsaM (122 aa).

This chain is Secretion system apparatus protein SsaM (ssaM), found in Salmonella typhimurium (strain LT2 / SGSC1412 / ATCC 700720).